The following is a 189-amino-acid chain: Small ribosomal subunit protein uS5 (189 aa).

Residues 20 to 83 (FVDRLVHINR…ESAKRALIRV (64 aa)) form the S5 DRBM domain.

Belongs to the universal ribosomal protein uS5 family. As to quaternary structure, part of the 30S ribosomal subunit. Contacts proteins S4 and S8.

Its function is as follows. With S4 and S12 plays an important role in translational accuracy. Functionally, located at the back of the 30S subunit body where it stabilizes the conformation of the head with respect to the body. In Beijerinckia indica subsp. indica (strain ATCC 9039 / DSM 1715 / NCIMB 8712), this protein is Small ribosomal subunit protein uS5.